The following is a 126-amino-acid chain: Fluoride-specific ion channel FluC (126 aa).

The next 4 helical transmembrane spans lie at 7 to 27 (LWLALGGAVGAVCRQAAVLLL), 36 to 56 (FPAAVLLINVLGSFLLGLTLA), 74 to 94 (GVLGAFTTFSTFSTELDGLLL), and 98 to 118 (GGLALAYAALSVGLGLTAAVA). The Na(+) site is built by glycine 77 and threonine 80.

Belongs to the fluoride channel Fluc/FEX (TC 1.A.43) family.

Its subcellular location is the cell membrane. The enzyme catalyses fluoride(in) = fluoride(out). With respect to regulation, na(+) is not transported, but it plays an essential structural role and its presence is essential for fluoride channel function. Functionally, fluoride-specific ion channel. Important for reducing fluoride concentration in the cell, thus reducing its toxicity. This chain is Fluoride-specific ion channel FluC, found in Deinococcus radiodurans (strain ATCC 13939 / DSM 20539 / JCM 16871 / CCUG 27074 / LMG 4051 / NBRC 15346 / NCIMB 9279 / VKM B-1422 / R1).